The chain runs to 185 residues: A-type ATP synthase subunit E (185 aa).

This sequence belongs to the V-ATPase E subunit family. Has multiple subunits with at least A(3), B(3), C, D, E, F, H, I and proteolipid K(x).

It localises to the cell membrane. In terms of biological role, component of the A-type ATP synthase that produces ATP from ADP in the presence of a proton gradient across the membrane. This Thermoplasma acidophilum (strain ATCC 25905 / DSM 1728 / JCM 9062 / NBRC 15155 / AMRC-C165) protein is A-type ATP synthase subunit E.